The primary structure comprises 66 residues: Toxin Boma6a (66 aa).

Residues 2 to 64 (RDAYIAQNYN…VPIKVEGKCH (63 aa)) enclose the LCN-type CS-alpha/beta domain. Disulfide bonds link Cys12/Cys63, Cys16/Cys36, Cys22/Cys46, and Cys26/Cys48.

It belongs to the long (4 C-C) scorpion toxin superfamily. Sodium channel inhibitor family. Alpha subfamily. As to expression, expressed by the venom gland.

The protein resides in the secreted. In terms of biological role, alpha toxins bind voltage-independently at site-3 of sodium channels (Nav) and inhibit the inactivation of the activated channels, thereby blocking neuronal transmission. This chain is Toxin Boma6a, found in Buthus occitanus mardochei (Moroccan scorpion).